The sequence spans 171 residues: Interleukin-26 (171 aa).

An N-terminal signal peptide occupies residues 1–21 (MLVNFILRCGLLLVTLSLAIA).

It belongs to the IL-10 family. As to quaternary structure, homodimer. As to expression, expressed in HVS transformed T-cells but not other T-cell lines or primary stimulated T-cells. Expressed in colonic T-cells including Th17 inflammatory T-cells; the expression is significantly increased in serum of patients with Crohn's disease (at protein level).

The protein resides in the secreted. Its function is as follows. May play a role in local mechanisms of mucosal immunity and seems to have a pro-inflammatory function. May play a role in inflammatory bowel disease. Activates STAT1 and STAT3, MAPK1/3 (ERK1/2), JUN and AKT. Induces expression of SOCS3, TNF-alpha and IL-8, secretion of IL-8 and IL-10 and surface expression of ICAM1. Decreases proliferation of intestinal epithelial cells. Is inhibited by heparin. The chain is Interleukin-26 (IL26) from Homo sapiens (Human).